A 1294-amino-acid chain; its full sequence is Phosphoribosylformylglycinamidine synthase (1294 aa).

The segment at 303 to 325 (WPGAATGSGGEIRDEGATGRGSK) is disordered. Residues 305–316 (GAATGSGGEIRD), 384–386 (TGY), and A676 contribute to the ATP site. D677, E716, N720, and D883 together coordinate Mg(2+). S885 is an ATP binding site. Residues 1041 to 1294 (VAVLREQGVN…MFRNARRQLG (254 aa)) form the Glutamine amidotransferase type-1 domain. Residue C1134 is the Nucleophile of the active site. Active-site residues include H1259 and E1261.

It in the N-terminal section; belongs to the FGAMS family. As to quaternary structure, monomer.

Its subcellular location is the cytoplasm. The enzyme catalyses N(2)-formyl-N(1)-(5-phospho-beta-D-ribosyl)glycinamide + L-glutamine + ATP + H2O = 2-formamido-N(1)-(5-O-phospho-beta-D-ribosyl)acetamidine + L-glutamate + ADP + phosphate + H(+). The protein operates within purine metabolism; IMP biosynthesis via de novo pathway; 5-amino-1-(5-phospho-D-ribosyl)imidazole from N(2)-formyl-N(1)-(5-phospho-D-ribosyl)glycinamide: step 1/2. Functionally, phosphoribosylformylglycinamidine synthase involved in the purines biosynthetic pathway. Catalyzes the ATP-dependent conversion of formylglycinamide ribonucleotide (FGAR) and glutamine to yield formylglycinamidine ribonucleotide (FGAM) and glutamate. This chain is Phosphoribosylformylglycinamidine synthase, found in Pectobacterium atrosepticum (strain SCRI 1043 / ATCC BAA-672) (Erwinia carotovora subsp. atroseptica).